We begin with the raw amino-acid sequence, 187 residues long: High affinity copper uptake protein 1 (187 aa).

The Extracellular segment spans residues 1-65 (MRMNHMEMHH…SSLVINTPGE (65 aa)). Residues 9–10 (HH) carry the Bis-His motif motif. N-linked (GlcNAc...) asparagine glycosylation is present at N19. A glycan (O-linked (GalNAc...) threonine) is linked at T30. The chain crosses the membrane as a helical span at residues 66–86 (MAGAFVAVFLLAMFYEGLKIA). Topologically, residues 87–129 (REGLLRKSQVSIRYNSMPVPGPNGTILMETHKTVGQQMLSFPH) are cytoplasmic. A Phosphothreonine modification is found at T111. The helical transmembrane segment at 130-150 (LLQTVLHIIQVVISYFLMLIF) threads the bilayer. Over 151-153 (MTY) the chain is Extracellular. The chain crosses the membrane as a helical span at residues 154–174 (NGYLCIAVAAGAGTGYFLFSW). Over 175–187 (KKAVVVDITEHCH) the chain is Cytoplasmic. C186 carries the post-translational modification Cysteine sulfenic acid (-SOH).

This sequence belongs to the copper transporter (Ctr) (TC 1.A.56) family. SLC31A subfamily. In terms of assembly, homotrimer; is stabilized by cisplatin via interactions between cisplatin and the methionine-rich clusters, and could be crucial for the copper(2+) reduction process and copper(1+) stabilization. Heterotrimer between SLC31A1, CCS and SOD1; this heterotrimer is copper(1+)-mediated and its maintenance is regulated through SOD1 activation. Interacts with KDR; this interaction is induced upon VEGFA stimulation leading to SLC31A1 and KDR subsequent co-internalization to early endosomes, thereby activating KDR downstream signaling in endothelial cells. Interacts (via C-terminal domain) with ATOX1 (via dimer form); this interaction improves ATOX1 stability and controls intracellular copper(1+) levels. Interacts with SLC31A2; this interaction stabilizes SLC31A2 and protects its from ubiquitination and degradation. Interacts (via C-terminal domain) with CCS; this interaction is copper(1+)-mediated. Post-translationally, O-Glycosylation at Thr-30 protects from proteolytic cleavage in the N-terminal extracellular domain. In terms of processing, proteolytic cleavage, leading to a truncated form, is facilitated by SLC31A2 and initiated preferentially by CTSL and to a minor extend by CTSB in endolysosomal compartments. A post-CTSL/cathepsin L processing occurs to yield to the fully truncated form. Sulfenylated at Cys-186 after stimulation with VEGFA, which induces SLC31A1-KDR disulfide bond formation and their co-internalization to early endosomes, driving to a sustained VEGFR2 signaling.

The protein resides in the cell membrane. It is found in the early endosome membrane. Its subcellular location is the recycling endosome membrane. It localises to the apical cell membrane. The protein localises to the late endosome membrane. The protein resides in the basolateral cell membrane. The catalysed reaction is Cu(+)(out) = Cu(+)(in). The enzyme catalyses Ag(+)(out) = Ag(+)(in). Its activity is regulated as follows. Copper uptake is inhibited by cold temperature, silver and zinc ions. Platinum-containing chemotherapeutic agents uptake is inhibited by cold temperature and copper. Uniporter that mediates the transport of copper(1+) from the extracellular space to the cytoplasm, across the plasma membrane. Then, delivers directly copper(1+) to specific chaperone such as ATOX1, via a copper(1+)- mediated transient interaction between the C-terminal domain and a copper(1+) chaperone, thus controlling intracellular copper(1+) levels. May function in copper(1+) import from the apical membrane thus may drive intestinal copper absorption. The copper(1+) transport mechanism is sodium-independent, saturable and of high-affinity. Also mediates the uptake of silver(1+). May function in the influx of the platinum-containing chemotherapeutic agents. The platinum-containing chemotherapeutic agents uptake is saturable. Also participates in the first step of copper(2+) acquisition by cells through a direct transfer of copper(2+) from copper(2+) carriers in blood, such as ALB to the N-terminal domain of SLC31A1, leading to copper(2+) reduction and probably followed by copper(1+) stabilization. In addition, functions as a redox sensor to promote angiogenesis in endothelial cells, in a copper(1+) transport independent manner, by transmitting the VEGF-induced ROS signal through a sulfenylation at Cys-189 leading to a subsequent disulfide bond formation between SLC31A1 and KDR. The SLC31A1-KDR complex is then co-internalized to early endosomes, driving a sustained VEGFR2 signaling. Functionally, mobilizes copper(1+) out of the endosomal compartment, making copper(1+) available for export out of the cells. This Rattus norvegicus (Rat) protein is High affinity copper uptake protein 1.